The sequence spans 391 residues: Ferrochelatase (391 aa).

Positions 196 and 281 each coordinate Fe cation.

Belongs to the ferrochelatase family.

Its subcellular location is the cytoplasm. It catalyses the reaction heme b + 2 H(+) = protoporphyrin IX + Fe(2+). It functions in the pathway porphyrin-containing compound metabolism; protoheme biosynthesis; protoheme from protoporphyrin-IX: step 1/1. Functionally, catalyzes the ferrous insertion into protoporphyrin IX. This chain is Ferrochelatase, found in Prochlorococcus marinus (strain NATL1A).